Reading from the N-terminus, the 229-residue chain is Putative N-acetylmannosamine-6-phosphate 2-epimerase (229 aa).

The protein belongs to the NanE family.

The enzyme catalyses an N-acyl-D-glucosamine 6-phosphate = an N-acyl-D-mannosamine 6-phosphate. The protein operates within amino-sugar metabolism; N-acetylneuraminate degradation; D-fructose 6-phosphate from N-acetylneuraminate: step 3/5. Converts N-acetylmannosamine-6-phosphate (ManNAc-6-P) to N-acetylglucosamine-6-phosphate (GlcNAc-6-P). The polypeptide is Putative N-acetylmannosamine-6-phosphate 2-epimerase (Shigella dysenteriae serotype 1 (strain Sd197)).